The following is a 20-amino-acid chain: KVFFEERFEDGWENRWVKKD.

Belongs to the calreticulin family. Post-translationally, glycosylated.

It localises to the endoplasmic reticulum lumen. Functionally, molecular calcium-binding chaperone promoting folding, oligomeric assembly and quality control in the ER via the calreticulin/calnexin cycle. This lectin may interact transiently with almost all of the monoglucosylated glycoproteins that are synthesized in the ER. This is Calreticulin from Spinacia oleracea (Spinach).